The following is a 201-amino-acid chain: Protease (201 aa).

Residues H55, D72, and C122 contribute to the active site.

Belongs to the peptidase C5 family. As to quaternary structure, interacts with protease cofactor pVI-C; this interaction is necessary for protease activation.

It is found in the virion. It localises to the host nucleus. The enzyme catalyses Cleaves proteins of the adenovirus and its host cell at two consensus sites: -Yaa-Xaa-Gly-Gly-|-Xaa- and -Yaa-Xaa-Gly-Xaa-|-Gly- (in which Yaa is Met, Ile or Leu, and Xaa is any amino acid).. With respect to regulation, requires DNA and protease cofactor for maximal activation. Inside nascent virions, becomes partially activated by binding to the viral DNA, allowing it to cleave the cofactor that binds to the protease and fully activates it. Actin, like the viral protease cofactor, seems to act as a cofactor in the cleavage of cytokeratin 18 and of actin itself. Cleaves viral precursor proteins (pTP, pIIIa, pVI, pVII, pVIII, and pX) inside newly assembled particles giving rise to mature virions. Protease complexed to its cofactor slides along the viral DNA to specifically locate and cleave the viral precursors. Mature virions have a weakened organization compared to the unmature virions, thereby facilitating subsequent uncoating. Without maturation, the particle lacks infectivity and is unable to uncoat. Late in adenovirus infection, in the cytoplasm, may participate in the cytoskeleton destruction. Cleaves host cell cytoskeletal keratins K7 and K18. The sequence is that of Protease from Pantherophis guttatus (Corn snake).